Consider the following 554-residue polypeptide: Potassium-transporting ATPase potassium-binding subunit (554 aa).

The next 12 membrane-spanning stretches (helical) occupy residues 1–21 (MSSQVAGLLQLTALIAALALA), 59–79 (WPAYLRGVLAFSAMSVLFLYL), 131–151 (GLAVQNFLSAAVGMAVAVALV), 174–194 (VRILVPISVIGAIVLVAAGAI), 246–266 (PNPLSNLFEVFLILLIPFALT), 279–299 (GYAILGAMAVIWIGFTALMMW), 323–343 (FGIAGSSIFAVATTLTSTGAV), 352–372 (GFGGGITLLGMQLGEIAPGGV), 375–395 (GLYGMLIMAIIAVFIAGLMVG), 412–432 (FAACYILITPALVLGFTAVAM), 481–501 (IGIAMLLGRFLPMVFVLALAG), and 525–545 (GLLVGTILIITGLTYFPALAL).

It belongs to the KdpA family. The system is composed of three essential subunits: KdpA, KdpB and KdpC.

Its subcellular location is the cell membrane. Part of the high-affinity ATP-driven potassium transport (or Kdp) system, which catalyzes the hydrolysis of ATP coupled with the electrogenic transport of potassium into the cytoplasm. This subunit binds the extracellular potassium ions and delivers the ions to the membrane domain of KdpB through an intramembrane tunnel. The protein is Potassium-transporting ATPase potassium-binding subunit of Streptomyces griseus subsp. griseus (strain JCM 4626 / CBS 651.72 / NBRC 13350 / KCC S-0626 / ISP 5235).